Consider the following 141-residue polypeptide: Large ribosomal subunit protein uL11 (141 aa).

It belongs to the universal ribosomal protein uL11 family. In terms of assembly, part of the ribosomal stalk of the 50S ribosomal subunit. Interacts with L10 and the large rRNA to form the base of the stalk. L10 forms an elongated spine to which L12 dimers bind in a sequential fashion forming a multimeric L10(L12)X complex. One or more lysine residues are methylated.

Forms part of the ribosomal stalk which helps the ribosome interact with GTP-bound translation factors. In Trichlorobacter lovleyi (strain ATCC BAA-1151 / DSM 17278 / SZ) (Geobacter lovleyi), this protein is Large ribosomal subunit protein uL11.